The following is a 496-amino-acid chain: L-arabinose isomerase (496 aa).

The Mn(2+) site is built by Glu-302, Glu-329, His-346, and His-445.

It belongs to the arabinose isomerase family. It depends on Mn(2+) as a cofactor.

It carries out the reaction beta-L-arabinopyranose = L-ribulose. The protein operates within carbohydrate degradation; L-arabinose degradation via L-ribulose; D-xylulose 5-phosphate from L-arabinose (bacterial route): step 1/3. In terms of biological role, catalyzes the conversion of L-arabinose to L-ribulose. The chain is L-arabinose isomerase from Thermotoga sp. (strain RQ2).